The following is a 599-amino-acid chain: Proline--tRNA ligase (599 aa).

It belongs to the class-II aminoacyl-tRNA synthetase family. ProS type 1 subfamily. As to quaternary structure, homodimer.

Its subcellular location is the cytoplasm. It catalyses the reaction tRNA(Pro) + L-proline + ATP = L-prolyl-tRNA(Pro) + AMP + diphosphate. Its function is as follows. Catalyzes the attachment of proline to tRNA(Pro) in a two-step reaction: proline is first activated by ATP to form Pro-AMP and then transferred to the acceptor end of tRNA(Pro). As ProRS can inadvertently accommodate and process non-cognate amino acids such as alanine and cysteine, to avoid such errors it has two additional distinct editing activities against alanine. One activity is designated as 'pretransfer' editing and involves the tRNA(Pro)-independent hydrolysis of activated Ala-AMP. The other activity is designated 'posttransfer' editing and involves deacylation of mischarged Ala-tRNA(Pro). The misacylated Cys-tRNA(Pro) is not edited by ProRS. The polypeptide is Proline--tRNA ligase (Bifidobacterium animalis subsp. lactis (strain AD011)).